The chain runs to 515 residues: Histidine ammonia-lyase (515 aa).

A cross-link (5-imidazolinone (Ala-Gly)) is located at residues A142–G144. S143 is subject to 2,3-didehydroalanine (Ser).

This sequence belongs to the PAL/histidase family. Contains an active site 4-methylidene-imidazol-5-one (MIO), which is formed autocatalytically by cyclization and dehydration of residues Ala-Ser-Gly.

The protein localises to the cytoplasm. The catalysed reaction is L-histidine = trans-urocanate + NH4(+). The protein operates within amino-acid degradation; L-histidine degradation into L-glutamate; N-formimidoyl-L-glutamate from L-histidine: step 1/3. This Bradyrhizobium sp. (strain BTAi1 / ATCC BAA-1182) protein is Histidine ammonia-lyase.